Here is a 145-residue protein sequence, read N- to C-terminus: Protein SprT-like (145 aa).

One can recognise a SprT-like domain in the interval Thr-4–His-141. His-64 contributes to the Zn(2+) binding site. The active site involves Glu-65. Zn(2+) is bound at residue His-68.

Belongs to the SprT family. The cofactor is Zn(2+).

The protein localises to the cytoplasm. This Streptococcus mutans serotype c (strain ATCC 700610 / UA159) protein is Protein SprT-like.